Here is a 133-residue protein sequence, read N- to C-terminus: Ribonuclease VapC10 (133 aa).

One can recognise a PINc domain in the interval 2–119 (ILVDSDVLIA…NVWHFPMFEQ (118 aa)). Mg(2+)-binding residues include Asp-5 and Asp-92.

The protein belongs to the PINc/VapC protein family. The cofactor is Mg(2+).

Functionally, toxic component of a type II toxin-antitoxin (TA) system. An RNase. The cognate antitoxin is VapB10. In Mycobacterium tuberculosis (strain CDC 1551 / Oshkosh), this protein is Ribonuclease VapC10.